A 224-amino-acid polypeptide reads, in one-letter code: Transcription factor HEC3 (224 aa).

2 disordered regions span residues 22-42 (SSNN…DPIG) and 68-88 (SLTT…EEEP). The segment covering 28 to 37 (KNDDHHHQHN) has biased composition (basic and acidic residues). Positions 68 to 77 (SLTTTTLLSG) are enriched in low complexity. Over residues 78 to 88 (DQEDDEDEEEP) the composition is skewed to acidic residues. One can recognise a bHLH domain in the interval 125 to 174 (ISDDPQSVAARHRRERISERIRILQRLVPGGTKMDTASMLDEAIRYVKFL). A disordered region spans residues 183–224 (NNTGYTPPPPQDQASQAVTTSWVSPPPPPSFGRGGRGVGELI). The span at 194–204 (DQASQAVTTSW) shows a compositional bias: polar residues. Residues 214–224 (GRGGRGVGELI) show a composition bias toward gly residues.

In terms of assembly, homodimer. Interacts with SPT. As to expression, gynoecium.

Its subcellular location is the nucleus. Its function is as follows. Required for the female reproductive tract development and fertility. The protein is Transcription factor HEC3 (HEC3) of Arabidopsis thaliana (Mouse-ear cress).